The following is a 1095-amino-acid chain: Voltage-gated inwardly rectifying potassium channel KCNH3 (1095 aa).

Topologically, residues 1–228 (MPAMRGLLAP…HCGALRATWD (228 aa)) are cytoplasmic. In terms of domain architecture, PAS spans 18–90 (IATRFDGTHS…QQIRKALDEH (73 aa)). A PAC domain is found at 93 to 145 (FKAELILYRKSGLPFWCLLDVIPIKNEKGEVALFLVSHKDISETKNRGGPDNW). Residues 137 to 150 (KNRGGPDNWKERGG) are compositionally biased toward basic and acidic residues. The segment at 137–161 (KNRGGPDNWKERGGGRRRYGRAGSK) is disordered. Residues 229-249 (GFILLATLYVAVTVPYSVCVS) traverse the membrane as a helical segment. The Extracellular portion of the chain corresponds to 250–259 (TAREPSAARG). A helical transmembrane segment spans residues 260-280 (PPSVCDLAVEVLFILDIVLNF). The Cytoplasmic portion of the chain corresponds to 281 to 302 (RTTFVSKSGQVVFAPKSICLHY). The chain crosses the membrane as a helical span at residues 303–323 (VTTWFLLDVIAALPFDLLHAF). Over 324 to 331 (KVNVYVGA) the chain is Extracellular. The helical; Voltage-sensor transmembrane segment at 332-352 (HLLKTVRLLRLLRLLPRLDRY) threads the bilayer. The Cytoplasmic segment spans residues 353–361 (SQYSAVVLT). Residues 362–382 (LLMAVFALLAHWVACVWFYIG) form a helical membrane-spanning segment. Residues 383–464 (QQEIESSESE…GGPSLRSAYI (82 aa)) are Extracellular-facing. The segment at 417 to 447 (PDGGNSSGQSENCSSSSSSSGSGGGRGSEAN) is disordered. Residues 419–436 (GGNSSGQSENCSSSSSSS) show a composition bias toward low complexity. Asn-421, Asn-428, and Asn-447 each carry an N-linked (GlcNAc...) asparagine glycan. The pore-forming intramembrane region spans 465–485 (TSLYFALSSLTSVGFGNVSAN). The short motif at 476 to 481 (SVGFGN) is the Selectivity filter element. The Extracellular portion of the chain corresponds to 486–490 (TDTEK). Residues 491 to 511 (IFSICTMLIGALMHAVVFGNV) traverse the membrane as a helical segment. Residues 512–1095 (TAIIQRMYAR…QWTQEEGTGV (584 aa)) lie on the Cytoplasmic side of the membrane. 593-708 (LFEAASRGCL…FAPRFSRGLR (116 aa)) lines the a nucleoside 3',5'-cyclic phosphate pocket. Disordered regions lie at residues 740–823 (EEKE…LPPM), 854–883 (VGQS…PSEA), and 965–1069 (GSVL…PWDP). Positions 784–796 (TAPRPRLGGRGRP) are enriched in basic residues. Low complexity predominate over residues 857–872 (SGPECSSSPSPGTESG). Over residues 974–991 (HPRPGQPPPLMAPWPWGP) the composition is skewed to pro residues.

The protein belongs to the potassium channel family. H (Eag) (TC 1.A.1.20) subfamily. Kv12.2/KCNH3 sub-subfamily. The potassium channel is probably composed of a homo- or heterotetrameric complex of pore-forming alpha subunits that can associate with modulating beta subunits. Interacts with KCNE1 and KCNE3; these interactions regulate KCNH3 trafficking to the plasma membrane and its subsequent voltage-gated potassium channel activity. In terms of processing, N-glycosylated. N-glycosylation mediates traffick to the cell membrane but is not necessary for voltage-gated potassium channel activity. In terms of tissue distribution, detected in brain, but not in other tissues.

It is found in the cell membrane. The catalysed reaction is K(+)(in) = K(+)(out). In terms of biological role, pore-forming (alpha) subunit of a voltage-gated inwardly rectifying potassium channel. Charactherized by a fast rate of activation during depolarization followed by a rapid inactivation at much more depolarized value causing inward rectification due to a C-type inactivation mechanism. Exhibits a rapid recovery from inactivation. This chain is Voltage-gated inwardly rectifying potassium channel KCNH3, found in Mus musculus (Mouse).